Here is a 105-residue protein sequence, read N- to C-terminus: Urease subunit beta (105 aa).

Belongs to the urease beta subunit family. In terms of assembly, heterotrimer of UreA (gamma), UreB (beta) and UreC (alpha) subunits. Three heterotrimers associate to form the active enzyme.

It localises to the cytoplasm. It catalyses the reaction urea + 2 H2O + H(+) = hydrogencarbonate + 2 NH4(+). It participates in nitrogen metabolism; urea degradation; CO(2) and NH(3) from urea (urease route): step 1/1. This Pseudomonas putida (strain W619) protein is Urease subunit beta.